A 402-amino-acid chain; its full sequence is S-adenosylmethionine synthase (402 aa).

H15 serves as a coordination point for ATP. A Mg(2+)-binding site is contributed by D17. E43 lines the K(+) pocket. 2 residues coordinate L-methionine: E56 and Q99. The flexible loop stretch occupies residues 99–109; sequence QSPDIAQGVDT. Residues 174–176, 247–248, D256, 262–263, A279, and K283 contribute to the ATP site; these read DGK, RF, and RK. D256 is an L-methionine binding site. Residue K287 coordinates L-methionine.

This sequence belongs to the AdoMet synthase family. As to quaternary structure, homotetramer; dimer of dimers. Mg(2+) serves as cofactor. It depends on K(+) as a cofactor.

It localises to the cytoplasm. It carries out the reaction L-methionine + ATP + H2O = S-adenosyl-L-methionine + phosphate + diphosphate. Its pathway is amino-acid biosynthesis; S-adenosyl-L-methionine biosynthesis; S-adenosyl-L-methionine from L-methionine: step 1/1. Catalyzes the formation of S-adenosylmethionine (AdoMet) from methionine and ATP. The overall synthetic reaction is composed of two sequential steps, AdoMet formation and the subsequent tripolyphosphate hydrolysis which occurs prior to release of AdoMet from the enzyme. In Streptomyces griseus subsp. griseus (strain JCM 4626 / CBS 651.72 / NBRC 13350 / KCC S-0626 / ISP 5235), this protein is S-adenosylmethionine synthase.